A 281-amino-acid polypeptide reads, in one-letter code: 2-dehydro-3-deoxyphosphooctonate aldolase (281 aa).

It belongs to the KdsA family.

It localises to the cytoplasm. It catalyses the reaction D-arabinose 5-phosphate + phosphoenolpyruvate + H2O = 3-deoxy-alpha-D-manno-2-octulosonate-8-phosphate + phosphate. Its pathway is carbohydrate biosynthesis; 3-deoxy-D-manno-octulosonate biosynthesis; 3-deoxy-D-manno-octulosonate from D-ribulose 5-phosphate: step 2/3. It participates in bacterial outer membrane biogenesis; lipopolysaccharide biosynthesis. This Stutzerimonas stutzeri (strain A1501) (Pseudomonas stutzeri) protein is 2-dehydro-3-deoxyphosphooctonate aldolase.